The chain runs to 730 residues: Replication restart protein PriA (730 aa).

In terms of domain architecture, Helicase ATP-binding spans 212–378 (LLFHSGFNVW…QNGKYQHLVL (167 aa)). ATP is bound at residue 225–232 (GVTGSGKT). Positions 321 to 324 (DEEH) match the DEAH box motif. The Zn(2+) site is built by cysteine 437, cysteine 440, cysteine 446, cysteine 449, cysteine 464, cysteine 467, cysteine 477, and cysteine 480. Residues 472-640 (TIPRQCGDCG…LPPFTFQALI (169 aa)) form the Helicase C-terminal domain.

The protein belongs to the helicase family. PriA subfamily. As to quaternary structure, component of the replication restart primosome. It depends on Zn(2+) as a cofactor.

It carries out the reaction Couples ATP hydrolysis with the unwinding of duplex DNA by translocating in the 3'-5' direction.. The enzyme catalyses ATP + H2O = ADP + phosphate + H(+). Its function is as follows. Initiates the restart of stalled replication forks, which reloads the replicative helicase on sites other than the origin of replication. Recognizes and binds to abandoned replication forks and remodels them to uncover a helicase loading site. Promotes assembly of the primosome at these replication forks. The chain is Replication restart protein PriA from Haemophilus influenzae (strain ATCC 51907 / DSM 11121 / KW20 / Rd).